A 129-amino-acid polypeptide reads, in one-letter code: ATP synthase epsilon chain (129 aa).

Belongs to the ATPase epsilon chain family. F-type ATPases have 2 components, CF(1) - the catalytic core - and CF(0) - the membrane proton channel. CF(1) has five subunits: alpha(3), beta(3), gamma(1), delta(1), epsilon(1). CF(0) has three main subunits: a, b and c.

Its subcellular location is the cell inner membrane. Its function is as follows. Produces ATP from ADP in the presence of a proton gradient across the membrane. This chain is ATP synthase epsilon chain, found in Campylobacter jejuni subsp. doylei (strain ATCC BAA-1458 / RM4099 / 269.97).